The following is a 519-amino-acid chain: Tetratricopeptide repeat protein 31 (519 aa).

A coiled-coil region spans residues Gln147–Cys197. Positions Glu175 to Arg187 are enriched in basic residues. Disordered regions lie at residues Glu175–Ser230 and Arg253–Ser294. A Phosphoserine modification is found at Ser278. TPR repeat units lie at residues Ser305–Asp338, His339–Trp372, and Pro373–Pro406. The segment at Pro474–Asp506 is disordered. Positions Pro481–Ser490 are enriched in polar residues.

The chain is Tetratricopeptide repeat protein 31 (TTC31) from Homo sapiens (Human).